The following is a 276-amino-acid chain: NH(3)-dependent NAD(+) synthetase (276 aa).

Position 46–53 (46–53) interacts with ATP; that stretch reads GISGGQDS. Aspartate 52 is a binding site for Mg(2+). Arginine 140 contacts deamido-NAD(+). Threonine 160 contacts ATP. Glutamate 165 contacts Mg(2+). Residues lysine 173 and aspartate 180 each contribute to the deamido-NAD(+) site. Residues lysine 189 and threonine 211 each contribute to the ATP site. 260-261 contributes to the deamido-NAD(+) binding site; that stretch reads HK.

This sequence belongs to the NAD synthetase family. In terms of assembly, homodimer.

It catalyses the reaction deamido-NAD(+) + NH4(+) + ATP = AMP + diphosphate + NAD(+) + H(+). Its pathway is cofactor biosynthesis; NAD(+) biosynthesis; NAD(+) from deamido-NAD(+) (ammonia route): step 1/1. Its function is as follows. Catalyzes the ATP-dependent amidation of deamido-NAD to form NAD. Uses ammonia as a nitrogen source. The polypeptide is NH(3)-dependent NAD(+) synthetase (Citrobacter koseri (strain ATCC BAA-895 / CDC 4225-83 / SGSC4696)).